The sequence spans 276 residues: Small ribosomal subunit protein uS2 (276 aa).

Residues alanine 251–alanine 276 form a disordered region. A compositionally biased stretch (low complexity) spans glutamate 252–alanine 276.

This sequence belongs to the universal ribosomal protein uS2 family.

The sequence is that of Small ribosomal subunit protein uS2 from Jannaschia sp. (strain CCS1).